A 385-amino-acid chain; its full sequence is Circadian-associated transcriptional repressor (385 aa).

The segment covering 1–26 (MDSPSSVSSYSSYSLSSSFPTSPVNS) has biased composition (low complexity). 3 disordered regions span residues 1–108 (MDSP…SLNT), 203–233 (GGGK…EKMD), and 365–385 (GHRE…LLNL). Basic and acidic residues predominate over residues 33–45 (DSEREDKGAHGPR). Positions 70 to 79 (VSGNQHTPSH) are enriched in polar residues.

As to quaternary structure, interacts with PER2, CRY2, BHLHE41, HDAC1 and NR3C1. Interacts with BMAL1.

It is found in the nucleus. Its subcellular location is the PML body. Its function is as follows. Transcriptional repressor which forms a negative regulatory component of the circadian clock and acts independently of the circadian transcriptional repressors: CRY1, CRY2 and BHLHE41. In a histone deacetylase-dependent manner represses the transcriptional activator activity of the CLOCK-BMAL1 heterodimer. Abrogates the interaction of BMAL1 with the transcriptional coactivator CREBBP and can repress the histone acetyl-transferase activity of the CLOCK-BMAL1 heterodimer, reducing histone acetylation of its target genes. Rhythmically binds the E-box elements (5'-CACGTG-3') on circadian gene promoters and its occupancy shows circadian oscillation antiphasic to BMAL1. Interacts with the glucocorticoid receptor (NR3C1) and contributes to the repressive function in the glucocorticoid response. The chain is Circadian-associated transcriptional repressor (CIART) from Homo sapiens (Human).